The chain runs to 217 residues: Large ribosomal subunit protein uL3 (217 aa).

The protein belongs to the universal ribosomal protein uL3 family. Part of the 50S ribosomal subunit. Forms a cluster with proteins L14 and L19.

In terms of biological role, one of the primary rRNA binding proteins, it binds directly near the 3'-end of the 23S rRNA, where it nucleates assembly of the 50S subunit. The polypeptide is Large ribosomal subunit protein uL3 (Mycobacterium sp. (strain KMS)).